The chain runs to 487 residues: ATP synthase subunit beta (487 aa).

164-171 (GGAGVGKT) is an ATP binding site.

The protein belongs to the ATPase alpha/beta chains family. F-type ATPases have 2 components, CF(1) - the catalytic core - and CF(0) - the membrane proton channel. CF(1) has five subunits: alpha(3), beta(3), gamma(1), delta(1), epsilon(1). CF(0) has four main subunits: a(1), b(1), b'(1) and c(9-12).

Its subcellular location is the cellular thylakoid membrane. It catalyses the reaction ATP + H2O + 4 H(+)(in) = ADP + phosphate + 5 H(+)(out). In terms of biological role, produces ATP from ADP in the presence of a proton gradient across the membrane. The catalytic sites are hosted primarily by the beta subunits. The protein is ATP synthase subunit beta of Synechococcus sp. (strain CC9605).